The primary structure comprises 601 residues: Glutathione-regulated potassium-efflux system protein KefB (601 aa).

13 helical membrane passes run 4–24 (SDFLLAGVLFLFAAVAAVPLA), 29–49 (IGAVLGYLLAGIAIGPWGLGF), 55–75 (EILHFSELGVVFLMFIIGLEL), 87–107 (IFGVGAAQVLLSSALLAGLLM), 115–135 (AAVVGGIGLAMSSTAMALQLM), 152–172 (VLLFQDLAVIPALALVPLLAG), 177–197 (HFDWMKIGMKVLAFVGMLIGG), 207–227 (FIAASGVREVFTAATLLLVLG), 230–250 (LFMDALGLSMALGTFIAGVLL), 268–288 (GLLLGLFFISVGMSLNLGVLY), 291–311 (LLWVVISVVVLVAVKILVLYL), 324–344 (MQFAGVLSQGGEFAFVLFSTA), and 356–376 (ALLLVTVTLSMMTTPLLMKLV). One can recognise an RCK N-terminal domain in the interval 400–519 (KPQVIVVGFG…AGVTQFSRET (120 aa)).

This sequence belongs to the monovalent cation:proton antiporter 2 (CPA2) transporter (TC 2.A.37) family. KefB subfamily. In terms of assembly, interacts with the regulatory subunit KefG.

Its subcellular location is the cell inner membrane. Pore-forming subunit of a potassium efflux system that confers protection against electrophiles. Catalyzes K(+)/H(+) antiport. The chain is Glutathione-regulated potassium-efflux system protein KefB from Escherichia coli O81 (strain ED1a).